Reading from the N-terminus, the 134-residue chain is Lymphocyte antigen 6S (134 aa).

Positions 1–26 (MSSLQAMKTLSLVLLVALLSMERAQG) are cleaved as a signal peptide. In terms of domain architecture, UPAR/Ly6 spans 28-76 (RCYRCLAVLEGASCSVVSCPFLDGVCVSQKVSVFGSKVRGENKLSLLSC). Disulfide bonds link Cys-29-Cys-53, Cys-32-Cys-41, Cys-76-Cys-98, and Cys-99-Cys-104. Asn-105 carries GPI-anchor amidated asparagine lipidation. The propeptide at 106 to 134 (AVVLAASSPWALCVQLLLSLGSVFLWALL) is removed in mature form.

The protein localises to the cell membrane. The polypeptide is Lymphocyte antigen 6S (Homo sapiens (Human)).